Reading from the N-terminus, the 721-residue chain is Protein mu-NS (721 aa).

An interaction with sigma-NS region spans residues 1–13 (MASFKGFSANTVP). The segment at 1–38 (MASFKGFSANTVPVSKTRKDTSSLTATPGLRAPSMSSP) is RNA-binding. Residues 14 to 40 (VSKTRKDTSSLTATPGLRAPSMSSPVD) form an interaction with mu-2 region. Positions 17-37 (TRKDTSSLTATPGLRAPSMSS) are disordered. Residues 471 to 721 (QSDTVDGIKL…IDFSVPADEL (251 aa)) are involved in the formation of factory-like inclusions. Coiled coils occupy residues 523 to 556 (LLSQ…ADVK) and 632 to 686 (KQAH…NQRQ).

Belongs to the orthoreovirus mu-NS protein family. Interacts with mu-2. Interacts with sigma-NS; in viral factories. Interacts with the inner capsid proteins lambda-1 and sigma-2, and outer capsid protein lambda-2; in viral factories. Post-translationally, the N-terminus is blocked.

The protein localises to the host cytoplasm. Its function is as follows. Non-structural protein implicated with protein sigma-NS in forming the matrix of viral factories, which are large inclusions in the host cytoplasm where replication intermediates are assembled and viral RNA replication takes place. Together with mu-2, recruits the other core proteins to these factories. This chain is Protein mu-NS (M3), found in Mammalia (T2J).